The sequence spans 90 residues: Large ribosomal subunit protein bL31 (90 aa).

Residues 71–90 form a disordered region; sequence KVKKFPSNADNQKEPAEEQE. The span at 81–90 shows a compositional bias: basic and acidic residues; the sequence is NQKEPAEEQE.

This sequence belongs to the bacterial ribosomal protein bL31 family. Type A subfamily. In terms of assembly, part of the 50S ribosomal subunit.

In terms of biological role, binds the 23S rRNA. The polypeptide is Large ribosomal subunit protein bL31 (rpmE) (Aster yellows witches'-broom phytoplasma (strain AYWB)).